Here is a 233-residue protein sequence, read N- to C-terminus: Rano class II histocompatibility antigen, A beta chain (233 aa).

The interval 1 to 80 is beta-1; that stretch reads DFVYQFKGLC…DTVCRYNYEE (80 aa). Topologically, residues 1–194 are extracellular; that stretch reads DFVYQFKGLC…RAQSESAQSK (194 aa). The N-linked (GlcNAc...) asparagine glycan is linked to Asn14. Residues 81 to 184 form a beta-2 region; the sequence is TEVPTSLRRL…SLESPVTVEW (104 aa). One can recognise an Ig-like C1-type domain in the interval 93–181; sequence PNVAISLSRT…DHASLESPVT (89 aa). A connecting peptide region spans residues 185-194; it reads RAQSESAQSK. A helical membrane pass occupies residues 195 to 215; sequence MLSGIGGLVLGVIFLGLGLFI. Topologically, residues 216-233 are cytoplasmic; sequence RHKRQKGPQGPPPAGLLQ.

Belongs to the MHC class II family.

The protein localises to the membrane. Functionally, involved in the presentation of foreign antigens to the immune system. The polypeptide is Rano class II histocompatibility antigen, A beta chain (RT1-B) (Rattus norvegicus (Rat)).